A 102-amino-acid polypeptide reads, in one-letter code: MASPTIAANAYANLARVLENSGAGKGSEASGQSFASLLKDAVGSVMESGRKSDAQTVAMAAGKANVMDVVTAVADTDVAVSTLVSVRDRVISAYEDIMKMPI.

The protein belongs to the FliE family.

It localises to the bacterial flagellum basal body. The sequence is that of Flagellar hook-basal body complex protein FliE 1 (fliE1) from Bradyrhizobium diazoefficiens (strain JCM 10833 / BCRC 13528 / IAM 13628 / NBRC 14792 / USDA 110).